The chain runs to 254 residues: Small ribosomal subunit protein uS2 (254 aa).

The protein belongs to the universal ribosomal protein uS2 family.

The chain is Small ribosomal subunit protein uS2 from Borrelia hermsii (strain HS1 / DAH).